The chain runs to 251 residues: NADPH-dependent oxidoreductase (251 aa).

This sequence belongs to the flavin oxidoreductase frp family. It depends on FMN as a cofactor.

Its function is as follows. Reduces FMN, organic nitro compounds and disulfide DTNB. Involved in maintenance of the cellular redox state and the disulfide stress response. This Staphylococcus aureus (strain Mu50 / ATCC 700699) protein is NADPH-dependent oxidoreductase (nfrA).